Reading from the N-terminus, the 194-residue chain is Thymidylate kinase (194 aa).

Residue 7–14 (GIDTAGKS) coordinates ATP.

It belongs to the thymidylate kinase family.

It carries out the reaction dTMP + ATP = dTDP + ADP. Functionally, phosphorylation of dTMP to form dTDP in both de novo and salvage pathways of dTTP synthesis. The polypeptide is Thymidylate kinase (Nautilia profundicola (strain ATCC BAA-1463 / DSM 18972 / AmH)).